We begin with the raw amino-acid sequence, 109 residues long: ATP synthase subunit c (109 aa).

2 helical membrane passes run 42–62 (YIGTGITMLAAGAVGLMQGFS) and 88–108 (LALAEAVAIYALIVSILIIFV).

Belongs to the ATPase C chain family. F-type ATPases have 2 components, F(1) - the catalytic core - and F(0) - the membrane proton channel. F(1) has five subunits: alpha(3), beta(3), gamma(1), delta(1), epsilon(1). F(0) has three main subunits: a(1), b(2) and c(10-14). The alpha and beta chains form an alternating ring which encloses part of the gamma chain. F(1) is attached to F(0) by a central stalk formed by the gamma and epsilon chains, while a peripheral stalk is formed by the delta and b chains.

The protein resides in the cell membrane. F(1)F(0) ATP synthase produces ATP from ADP in the presence of a proton or sodium gradient. F-type ATPases consist of two structural domains, F(1) containing the extramembraneous catalytic core and F(0) containing the membrane proton channel, linked together by a central stalk and a peripheral stalk. During catalysis, ATP synthesis in the catalytic domain of F(1) is coupled via a rotary mechanism of the central stalk subunits to proton translocation. Its function is as follows. Key component of the F(0) channel; it plays a direct role in translocation across the membrane. A homomeric c-ring of between 10-14 subunits forms the central stalk rotor element with the F(1) delta and epsilon subunits. This is ATP synthase subunit c from Ureaplasma parvum serovar 3 (strain ATCC 27815 / 27 / NCTC 11736).